The chain runs to 803 residues: Myb-like protein V (803 aa).

Disordered stretches follow at residues 237 to 333 and 429 to 803; these read SNIY…LPGL and KSTS…SRRK. Residues 258–323 adopt a coiled-coil conformation; sequence DANDKNENNN…ENNKNKRTKS (66 aa). Residues 271–294 show a composition bias toward acidic residues; sequence DDADDAAADDADDADDDDMDDESD. Low complexity predominate over residues 295 to 315; sequence SNNNNKNSNNKNSNNKNSNEN. Residues 332 to 379 form the Myb-like domain; it reads GLWTDEECRSLIKAVMIIGHRWIKIKEDYYSTSKRKPSQLKDKMRSLR. Coiled coils occupy residues 400-429 and 463-496; these read EIEK…SNIK and NNED…NSAV. Over residues 429-438 the composition is skewed to polar residues; sequence KSTSNTSAAS. Acidic residues-rich tracts occupy residues 448–480 and 510–533; these read NDSD…DEND and EEEE…EENE. 2 stretches are compositionally biased toward basic residues: residues 537–553 and 568–577; these read KQKR…KKLK and HKSKLKSKPQ. Residues 573–616 adopt a coiled-coil conformation; that stretch reads KSKPQRKVEKEESEKEESEEEESEEEEEEDDEDYESEEDKKKKK. Acidic residues predominate over residues 586 to 609; the sequence is EKEESEEEESEEEEEEDDEDYESE. 2 stretches are compositionally biased toward low complexity: residues 625–636 and 666–733; these read TSTHTTTTTTTT and KKSN…PTKK. Basic and acidic residues predominate over residues 786–795; it reads LNKDSKENKK.

The chain is Myb-like protein V (mybV) from Dictyostelium discoideum (Social amoeba).